We begin with the raw amino-acid sequence, 816 residues long: Subtilisin-like protease SBT2.6 (816 aa).

An N-terminal signal peptide occupies residues 1–19; the sequence is MDIGCKVLVFFTCFLTVTA. Residues 20–126 constitute a propeptide, activation peptide; it reads EIYIVTMEGE…VDRDWKVRKL (107 aa). Positions 22 to 124 constitute an Inhibitor I9 domain; sequence YIVTMEGEPI…KSVDRDWKVR (103 aa). A Peptidase S8 domain is found at 120 to 672; it reads DWKVRKLTTH…SGHVNPSAAL (553 aa). Active-site charge relay system residues include D160 and H235. In terms of domain architecture, PA spans 418-492; sequence DCQKPEVLNK…SCIPGILITD (75 aa). Residues N504 and N578 are each glycosylated (N-linked (GlcNAc...) asparagine). S597 acts as the Charge relay system in catalysis. N702 carries an N-linked (GlcNAc...) asparagine glycan.

Belongs to the peptidase S8 family.

Its subcellular location is the secreted. The chain is Subtilisin-like protease SBT2.6 from Arabidopsis thaliana (Mouse-ear cress).